A 931-amino-acid polypeptide reads, in one-letter code: Neuropilin-2 (931 aa).

The segment at residues 1 to 20 (MDMFPLTWVFLALYFSRHQV) is a signal peptide (or 22). The Extracellular segment spans residues 21-864 (RGQPDPPCGG…EKSWLYTLDP (844 aa)). 3 disulfide bridges follow: Cys-28–Cys-55, Cys-83–Cys-105, and Cys-149–Cys-175. 2 CUB domains span residues 28–142 (CGGR…YEIF) and 149–267 (CSKN…YYLV). N-linked (GlcNAc...) asparagine glycosylation is found at Asn-152 and Asn-157. Positions 197, 211, and 252 each coordinate Ca(2+). A disulfide bond links Cys-208 and Cys-230. Intrachain disulfides connect Cys-277–Cys-427 and Cys-434–Cys-592. F5/8 type C domains lie at 277–427 (CNVP…LFGC) and 434–592 (CSNM…VLGC). Residues 298-310 (TYSDGRWTPQQSR) are compositionally biased toward polar residues. Residues 298–317 (TYSDGRWTPQQSRLHGDDNG) form a disordered region. The tract at residues 601-622 (VETLGPTVKSEETTTPYPTEEE) is disordered. Asn-629 is a glycosylation site (N-linked (GlcNAc...) asparagine). Residues 642 to 802 (SGFNCNFDFL…TDVPLENCME (161 aa)) form the MAM domain. N-linked (GlcNAc...) asparagine glycosylation occurs at Asn-839. The chain crosses the membrane as a helical span at residues 865-889 (ILITIIAMSSLGVLLGATCAGLLLY). Over 890–931 (CTCSYSGLSSRSCTTLENYNFELYDGLKHKVKMNHQKCCSEA) the chain is Cytoplasmic.

This sequence belongs to the neuropilin family. Heterodimer with NRP1. Binds PLXNB1. As to quaternary structure, (Microbial infection) Interacts with human cytomegalovirus proteins gL, UL128, UL130 and UL131A.

It is found in the membrane. Its subcellular location is the secreted. High affinity receptor for semaphorins 3C, 3F, VEGF-165 and VEGF-145 isoforms of VEGF, and the PLGF-2 isoform of PGF. Functionally, (Microbial infection) Acts as a receptor for human cytomegalovirus pentamer-dependent entry in epithelial and endothelial cells. The chain is Neuropilin-2 (NRP2) from Homo sapiens (Human).